A 274-amino-acid polypeptide reads, in one-letter code: 3-methyl-2-oxobutanoate hydroxymethyltransferase (274 aa).

Positions 44 and 83 each coordinate Mg(2+). 3-methyl-2-oxobutanoate-binding positions include 44 to 45 (DS), Asp-83, and Lys-113. Mg(2+) is bound at residue Glu-115. Residue Glu-182 is the Proton acceptor of the active site.

The protein belongs to the PanB family. Homodecamer; pentamer of dimers. Mg(2+) is required as a cofactor.

Its subcellular location is the cytoplasm. The catalysed reaction is 3-methyl-2-oxobutanoate + (6R)-5,10-methylene-5,6,7,8-tetrahydrofolate + H2O = 2-dehydropantoate + (6S)-5,6,7,8-tetrahydrofolate. The protein operates within cofactor biosynthesis; (R)-pantothenate biosynthesis; (R)-pantoate from 3-methyl-2-oxobutanoate: step 1/2. Functionally, catalyzes the reversible reaction in which hydroxymethyl group from 5,10-methylenetetrahydrofolate is transferred onto alpha-ketoisovalerate to form ketopantoate. The polypeptide is 3-methyl-2-oxobutanoate hydroxymethyltransferase (Campylobacter jejuni subsp. doylei (strain ATCC BAA-1458 / RM4099 / 269.97)).